The chain runs to 381 residues: Alpha-methylacyl-CoA racemase (381 aa).

Residues arginine 36 and leucine 54 to lysine 57 contribute to the substrate site. Lysine 57 bears the N6-acetyllysine mark. Lysine 86 and lysine 100 each carry N6-acetyllysine; alternate. N6-succinyllysine; alternate is present on residues lysine 86 and lysine 100. Lysine 117 is subject to N6-acetyllysine. Glycine 120–tyrosine 125 contacts substrate. Histidine 121 acts as the Proton acceptor in catalysis. Residue aspartate 151 is the Proton donor of the active site. An N6-succinyllysine modification is found at lysine 267. The tract at residues threonine 316–serine 344 is disordered. The short motif at alanine 379 to leucine 381 is the Microbody targeting signal element.

Belongs to the CoA-transferase III family. As to quaternary structure, monomer.

It is found in the peroxisome. The protein resides in the mitochondrion. The catalysed reaction is a (2S)-2-methylacyl-CoA = a (2R)-2-methylacyl-CoA. It catalyses the reaction (25R)-3alpha,7alpha,12alpha-trihydroxy-5beta-cholestan-26-oyl-CoA = (25S)-3alpha,7alpha,12alpha-trihydroxy-5beta-cholestan-26-oyl-CoA. It carries out the reaction (2R,6)-dimethylheptanoyl-CoA = (2S,6)-dimethylheptanoyl-CoA. The protein operates within lipid metabolism; bile acid biosynthesis. Its pathway is lipid metabolism; fatty acid metabolism. In terms of biological role, catalyzes the interconversion of (R)- and (S)-stereoisomers of alpha-methyl-branched-chain fatty acyl-CoA esters. Acts only on coenzyme A thioesters, not on free fatty acids, and accepts as substrates a wide range of alpha-methylacyl-CoAs, including pristanoyl-CoA, trihydroxycoprostanoyl-CoA (an intermediate in bile acid synthesis), and arylpropionic acids like the anti-inflammatory drug ibuprofen (2-(4-isobutylphenyl)propionic acid) but neither 3-methyl-branched nor linear-chain acyl-CoAs. This chain is Alpha-methylacyl-CoA racemase (Amacr), found in Mus musculus (Mouse).